Consider the following 347-residue polypeptide: Probable nitronate monooxygenase (347 aa).

Residues asparagine 69, glutamine 171, glycine 176, glycine 213, and 232-235 (QIGS) each bind FMN.

It belongs to the nitronate monooxygenase family. NMO class I subfamily. FMN is required as a cofactor.

The enzyme catalyses 3 propionate 3-nitronate + 3 O2 + H2O = 3 3-oxopropanoate + 2 nitrate + nitrite + H2O2 + 3 H(+). Nitronate monooxygenase that uses molecular oxygen to catalyze the oxidative denitrification of alkyl nitronates. Acts on propionate 3-nitronate (P3N), the presumed physiological substrate. Probably functions in the detoxification of P3N, a metabolic poison produced by plants and fungi as a defense mechanism. In Bacillus subtilis (strain 168), this protein is Probable nitronate monooxygenase (yrpB).